A 360-amino-acid chain; its full sequence is 3-isopropylmalate dehydrogenase (360 aa).

Position 76–89 (76–89 (GPKWEPLDYSLRPE)) interacts with NAD(+). Residues R96, R106, R134, and D224 each contribute to the substrate site. 3 residues coordinate Mg(2+): D224, D248, and D252. 282 to 294 (GSAPDIAGRGIAN) contacts NAD(+).

This sequence belongs to the isocitrate and isopropylmalate dehydrogenases family. LeuB type 1 subfamily. Homodimer. Mg(2+) is required as a cofactor. The cofactor is Mn(2+).

The protein localises to the cytoplasm. It carries out the reaction (2R,3S)-3-isopropylmalate + NAD(+) = 4-methyl-2-oxopentanoate + CO2 + NADH. Its pathway is amino-acid biosynthesis; L-leucine biosynthesis; L-leucine from 3-methyl-2-oxobutanoate: step 3/4. Functionally, catalyzes the oxidation of 3-carboxy-2-hydroxy-4-methylpentanoate (3-isopropylmalate) to 3-carboxy-4-methyl-2-oxopentanoate. The product decarboxylates to 4-methyl-2 oxopentanoate. The chain is 3-isopropylmalate dehydrogenase from Methylococcus capsulatus (strain ATCC 33009 / NCIMB 11132 / Bath).